Consider the following 129-residue polypeptide: Ribosome-binding factor A (129 aa).

This sequence belongs to the RbfA family. As to quaternary structure, monomer. Binds 30S ribosomal subunits, but not 50S ribosomal subunits or 70S ribosomes.

It localises to the cytoplasm. In terms of biological role, one of several proteins that assist in the late maturation steps of the functional core of the 30S ribosomal subunit. Associates with free 30S ribosomal subunits (but not with 30S subunits that are part of 70S ribosomes or polysomes). Required for efficient processing of 16S rRNA. May interact with the 5'-terminal helix region of 16S rRNA. This is Ribosome-binding factor A from Desulfosudis oleivorans (strain DSM 6200 / JCM 39069 / Hxd3) (Desulfococcus oleovorans).